We begin with the raw amino-acid sequence, 209 residues long: Ribonuclease HII (209 aa).

The RNase H type-2 domain occupies 20–209 (DSEIGIDEVG…KSFLNKLNLI (190 aa)). A divalent metal cation-binding residues include D26, E27, and D122.

The protein belongs to the RNase HII family. It depends on Mn(2+) as a cofactor. The cofactor is Mg(2+).

The protein localises to the cytoplasm. It catalyses the reaction Endonucleolytic cleavage to 5'-phosphomonoester.. Endonuclease that specifically degrades the RNA of RNA-DNA hybrids. The chain is Ribonuclease HII from Prochlorococcus marinus subsp. pastoris (strain CCMP1986 / NIES-2087 / MED4).